The following is a 107-amino-acid chain: Translation initiation factor IF-1, chloroplastic (107 aa).

The S1-like domain occupies 8 to 83 (REKKNPREAK…SKGRIIYRLP (76 aa)). Positions 81-107 (RLPHKDSKRTEDSKDTEDLKDTKDSKD) are disordered. Basic and acidic residues predominate over residues 83 to 107 (PHKDSKRTEDSKDTEDLKDTKDSKD).

The protein belongs to the IF-1 family. As to quaternary structure, component of the 30S ribosomal translation pre-initiation complex which assembles on the 30S ribosome in the order IF-2 and IF-3, IF-1 and N-formylmethionyl-tRNA(fMet); mRNA recruitment can occur at any time during PIC assembly.

The protein localises to the plastid. It is found in the chloroplast. In terms of biological role, one of the essential components for the initiation of protein synthesis. Stabilizes the binding of IF-2 and IF-3 on the 30S subunit to which N-formylmethionyl-tRNA(fMet) subsequently binds. Helps modulate mRNA selection, yielding the 30S pre-initiation complex (PIC). Upon addition of the 50S ribosomal subunit IF-1, IF-2 and IF-3 are released leaving the mature 70S translation initiation complex. The chain is Translation initiation factor IF-1, chloroplastic from Saccharum hybrid (Sugarcane).